We begin with the raw amino-acid sequence, 146 residues long: Hemoglobin subunit beta (146 aa).

Val-1 is subject to N-acetylvaline. The Globin domain occupies 2-146; the sequence is HLTDAEKALV…VATALAHKYH (145 aa). Thr-12 is subject to Phosphothreonine. Position 44 is a phosphoserine (Ser-44). Residue Lys-59 is modified to N6-acetyllysine. His-63 contributes to the heme b binding site. Lys-82 is subject to N6-acetyllysine. His-92 contacts heme b. S-nitrosocysteine is present on Cys-93. Lys-144 is modified (N6-acetyllysine).

The protein belongs to the globin family. Heterotetramer of two alpha chains and two beta chains. In terms of tissue distribution, red blood cells.

In terms of biological role, involved in oxygen transport from the lung to the various peripheral tissues. This Peromyscus californicus (California mouse) protein is Hemoglobin subunit beta.